Here is a 609-residue protein sequence, read N- to C-terminus: Aminopeptidase ltah-1.1 (609 aa).

Substrate is bound by residues 137–139 (QCQ) and 268–273 (PFGGME). His-297 provides a ligand contact to Zn(2+). Glu-298 (proton acceptor) is an active-site residue. Zn(2+) is bound by residues His-301 and Glu-320. The active-site Proton donor is Tyr-387. 564 to 566 (RMK) lines the substrate pocket.

Belongs to the peptidase M1 family. Zn(2+) serves as cofactor.

It localises to the cytoplasm. The catalysed reaction is Release of N-terminal Arg and Lys from oligopeptides when P1' is not Pro. Also acts on arylamides of Arg and Lys.. Functionally, aminopeptidase which preferentially removes N-terminal Arg and Lys residues from peptides and proteins. This chain is Aminopeptidase ltah-1.1, found in Caenorhabditis elegans.